Here is an 876-residue protein sequence, read N- to C-terminus: Alanine--tRNA ligase (876 aa).

4 residues coordinate Zn(2+): histidine 562, histidine 566, cysteine 666, and histidine 670.

This sequence belongs to the class-II aminoacyl-tRNA synthetase family. Zn(2+) serves as cofactor.

The protein resides in the cytoplasm. It carries out the reaction tRNA(Ala) + L-alanine + ATP = L-alanyl-tRNA(Ala) + AMP + diphosphate. In terms of biological role, catalyzes the attachment of alanine to tRNA(Ala) in a two-step reaction: alanine is first activated by ATP to form Ala-AMP and then transferred to the acceptor end of tRNA(Ala). Also edits incorrectly charged Ser-tRNA(Ala) and Gly-tRNA(Ala) via its editing domain. The sequence is that of Alanine--tRNA ligase from Marinobacter nauticus (strain ATCC 700491 / DSM 11845 / VT8) (Marinobacter aquaeolei).